Reading from the N-terminus, the 545-residue chain is ATP synthase F(1) complex subunit alpha, mitochondrial (545 aa).

The ATP site is built by Gln216, Gly218, Lys219, Thr220, and Ser221. Mg(2+) is bound at residue Thr220. Position 304 (Asp304) interacts with Mg(2+). ATP is bound by residues Gln465 and Gln467.

It belongs to the ATPase alpha/beta chains family. In terms of assembly, homotrimer. Component of the ATP synthase complex composed at least of ATP5F1A/subunit alpha, ATP5F1B/subunit beta, ATP5MC1/subunit c (homooctomer), MT-ATP6/subunit a, MT-ATP8/subunit 8, ATP5ME/subunit e, ATP5MF/subunit f, ATP5MG/subunit g, ATP5MK/subunit k, ATP5MJ/subunit j, ATP5F1C/subunit gamma, ATP5F1D/subunit delta, ATP5F1E/subunit epsilon, ATP5PF/subunit F6, ATP5PB/subunit b, ATP5PD/subunit d, ATP5PO/subunit OSCP. ATP synthase complex consists of a soluble F(1) head domain (subunits alpha(3) and beta(3)) - the catalytic core - and a membrane F(0) domain - the membrane proton channel (subunits c, a, 8, e, f, g, k and j). These two domains are linked by a central stalk (subunits gamma, delta, and epsilon) rotating inside the F1 region and a stationary peripheral stalk (subunits F6, b, d, and OSCP).

It is found in the mitochondrion inner membrane. In terms of biological role, subunit alpha, of the mitochondrial membrane ATP synthase complex (F(1)F(0) ATP synthase or Complex V) that produces ATP from ADP in the presence of a proton gradient across the membrane which is generated by electron transport complexes of the respiratory chain. ATP synthase complex consist of a soluble F(1) head domain - the catalytic core - and a membrane F(1) domain - the membrane proton channel. These two domains are linked by a central stalk rotating inside the F(1) region and a stationary peripheral stalk. During catalysis, ATP synthesis in the catalytic domain of F(1) is coupled via a rotary mechanism of the central stalk subunits to proton translocation. In vivo, can only synthesize ATP although its ATP hydrolase activity can be activated artificially in vitro. With the catalytic subunit beta (ATP5F1B), forms the catalytic core in the F(1) domain. Subunit alpha does not bear the catalytic high-affinity ATP-binding sites. The protein is ATP synthase F(1) complex subunit alpha, mitochondrial of Xenopus laevis (African clawed frog).